The chain runs to 413 residues: Ribulose bisphosphate carboxylase large chain (413 aa).

Substrate is bound by residues N100 and T150. The active-site Proton acceptor is K152. A substrate-binding site is contributed by K154. The Mg(2+) site is built by K178, D180, and E181. K178 is modified (N6-carboxylysine). H271 acts as the Proton acceptor in catalysis. R272, H304, and S356 together coordinate substrate.

This sequence belongs to the RuBisCO large chain family. Type I subfamily. As to quaternary structure, heterohexadecamer of 8 large chains and 8 small chains; disulfide-linked. The disulfide link is formed within the large subunit homodimers. The cofactor is Mg(2+). The disulfide bond which can form in the large chain dimeric partners within the hexadecamer appears to be associated with oxidative stress and protein turnover.

Its subcellular location is the plastid. It is found in the chloroplast. The catalysed reaction is 2 (2R)-3-phosphoglycerate + 2 H(+) = D-ribulose 1,5-bisphosphate + CO2 + H2O. It catalyses the reaction D-ribulose 1,5-bisphosphate + O2 = 2-phosphoglycolate + (2R)-3-phosphoglycerate + 2 H(+). RuBisCO catalyzes two reactions: the carboxylation of D-ribulose 1,5-bisphosphate, the primary event in carbon dioxide fixation, as well as the oxidative fragmentation of the pentose substrate in the photorespiration process. Both reactions occur simultaneously and in competition at the same active site. The polypeptide is Ribulose bisphosphate carboxylase large chain (rbcL) (Adiantum pedatum (Northern maidenhair fern)).